Here is a 335-residue protein sequence, read N- to C-terminus: Arylacetonitrilase (335 aa).

A CN hydrolase domain is found at 6–291 (LKVAITQAQP…EGIVYADLDM (286 aa)). Glu-46 functions as the Proton acceptor in the catalytic mechanism. Lys-127 is a catalytic residue. Catalysis depends on Cys-168, which acts as the Nucleophile.

The protein belongs to the carbon-nitrogen hydrolase superfamily. Nitrilase family.

It carries out the reaction a nitrile + 2 H2O = a carboxylate + NH4(+). The catalysed reaction is 4-chlorophenylacetonitrile + 2 H2O = 4-chlorophenylacetate + NH4(+). Its function is as follows. Nitrilase that hydrolyzes preferentially phenylacetonitrile, (R,S)-mandelonitrile, and 3-indolylacetonitrile. This is Arylacetonitrilase from Arthroderma benhamiae (strain ATCC MYA-4681 / CBS 112371) (Trichophyton mentagrophytes).